Consider the following 389-residue polypeptide: Protein CysO (389 aa).

Lys-127 bears the N6-(pyridoxal phosphate)lysine mark. Pyridoxal 5'-phosphate-binding positions include Asn-155, 261 to 265, and Ser-341; that span reads GTSGH.

This sequence belongs to the cysteine synthase/cystathionine beta-synthase family. Homodimer. Requires pyridoxal 5'-phosphate as cofactor.

It catalyses the reaction O-acetyl-L-serine + hydrogen sulfide = L-cysteine + acetate. The catalysed reaction is O-phospho-L-serine + hydrogen sulfide + H(+) = L-cysteine + phosphate. The enzyme catalyses L-homocysteine + L-serine = L,L-cystathionine + H2O. Its pathway is amino-acid biosynthesis; L-cysteine biosynthesis; L-cysteine from L-serine: step 2/2. Cysteine synthase that can also catalyze the synthesis of S-sulfo-L-cysteine from thiosulfate and O(3)-acetyl-L-serine, as well as the sulfhydrylation of L-serine by sulfide. The chain is Protein CysO (cysO) from Aeropyrum pernix (strain ATCC 700893 / DSM 11879 / JCM 9820 / NBRC 100138 / K1).